Consider the following 144-residue polypeptide: Maximins 7/H6 (144 aa).

A signal peptide spans 1–18 (MNFKYIVAVSFLIASAYA). Positions 19–43 (RSEENDEQSLSQRDILEEESLREIR) are excised as a propeptide. An Asparagine amide modification is found at Asn70. Positions 74 to 123 (TAEDHEVMKRLEAVMRDLDSLDYPEEAAERETRGFNQEEIANLFTKKEKR) are excised as a propeptide. Position 143 is a leucine amide (Leu143).

It belongs to the bombinin family. In terms of tissue distribution, expressed by the skin glands.

The protein localises to the secreted. Its function is as follows. Maximin-7 shows antimicrobial activity against bacteria and against the fungus C.albicans. It has little hemolytic activity. In terms of biological role, maximin-H6 shows antimicrobial activity against bacteria and against the fungus C.albicans. Shows strong hemolytic activity. The protein is Maximins 7/H6 of Bombina maxima (Giant fire-bellied toad).